The following is an 832-amino-acid chain: Cytosolic carboxypeptidase-like protein 5 (832 aa).

Residues 27-50 are disordered; the sequence is TVPSDGEGVGGAATAPTSGSASSP. Residues 38-50 are compositionally biased toward low complexity; it reads AATAPTSGSASSP. Residues 157 to 571 form the Peptidase M14 domain; the sequence is YPFSYSDCQD…ALAIAALDMA (415 aa). H252 and E255 together coordinate Zn(2+). The segment covering 343–354 has biased composition (low complexity); that stretch reads NSKNPSNQQPSS. Disordered regions lie at residues 343–362 and 376–402; these read NSKN…PEVP and LHLG…KTDP. Over residues 384-401 the composition is skewed to basic and acidic residues; the sequence is GENHDRWTETEPTEEKTD. H435 is a Zn(2+) binding site. The active-site Proton donor/acceptor is the E517. The disordered stretch occupies residues 606 to 752; the sequence is STANVGLNKK…ASPTSSRNMG (147 aa). Residues 621–636 show a composition bias toward polar residues; that stretch reads PPKSNNGLPVSCSENA. Residues 644 to 654 are compositionally biased toward low complexity; the sequence is STGTSTGGSSS. Over residues 655–666 the composition is skewed to polar residues; that stretch reads QQNSPQMKNSPS. Low complexity predominate over residues 708-752; the sequence is QQQQQQQQQQQQQQQQPLNQRSTTSSLAPSPTLASASPTSSRNMG.

It belongs to the peptidase M14 family. It depends on Zn(2+) as a cofactor.

The protein localises to the cytoplasm. It is found in the cytosol. Its subcellular location is the nucleus. It localises to the cytoskeleton. The protein resides in the spindle. The protein localises to the midbody. The catalysed reaction is gamma-L-glutamyl-L-glutamyl-[protein] + H2O = L-glutamyl-[protein] + L-glutamate. It catalyses the reaction (L-glutamyl)(n+1)-gamma-L-glutamyl-L-glutamyl-[protein] + H2O = (L-glutamyl)(n)-gamma-L-glutamyl-L-glutamyl-[protein] + L-glutamate. The enzyme catalyses C-terminal L-alpha-aminoacyl-L-glutamyl-[tubulin] + H2O = C-terminal L-alpha-aminoacyl-[tubulin] + L-glutamate. It carries out the reaction C-terminal L-alpha-aminoacyl-L-glutamyl-L-glutamyl-[tubulin] + H2O = C-terminal L-alpha-aminoacyl-L-glutamyl-[tubulin] + L-glutamate. Functionally, metallocarboxypeptidase that mediates deglutamylation of tubulin and non-tubulin target proteins. Catalyzes the removal of polyglutamate side chains present on the gamma-carboxyl group of glutamate residues within the C-terminal tail of alpha- and beta-tubulin. Cleaves alpha- and gamma-linked polyglutamate tubulin side-chain, as well as the branching point glutamate. Also catalyzes the removal of alpha-linked glutamate residues from the carboxy-terminus of alpha-tubulin. Mediates deglutamylation of nucleotidyltransferase CGAS, leading to CGAS antiviral defense response activation. This chain is Cytosolic carboxypeptidase-like protein 5 (Agbl5), found in Rattus norvegicus (Rat).